A 300-amino-acid polypeptide reads, in one-letter code: DNA repair protein PprA (300 aa).

Position 88 is a phosphothreonine (Thr88). At Ser128 the chain carries Phosphoserine. Position 160 is a phosphothreonine (Thr160).

Phosphorylated by RqkA in vitro. Phosphorylated primarily at Thr-88, and to a little extent at Ser-128 and Thr-160.

With respect to regulation, phosphorylation increases DNA binding affinity. Functionally, dsDNA-binding protein that contributes to the ionizing radiation resistance of D.radiodurans. Plays a role in DNA repair and genome reconstitution, and is necessary for recovery from severe genomic fragmentation as a result of exposure to severe levels of ionizing radiation. In vitro, binds to double-stranded DNA carrying strand breaks and stimulates the DNA end-joining reaction catalyzed by DNA ligases. Thus, PprA plays a critical role in a non-homologous end-joining (NHEJ) pathway for the repair of radiation-induced DNA double-strands breaks. Cannot bind to dsDNA without strand breaks or single-stranded DNA. The polypeptide is DNA repair protein PprA (pprA) (Deinococcus radiodurans (strain ATCC 13939 / DSM 20539 / JCM 16871 / CCUG 27074 / LMG 4051 / NBRC 15346 / NCIMB 9279 / VKM B-1422 / R1)).